Reading from the N-terminus, the 1010-residue chain is Regulator of telomere elongation helicase 1 homolog (1010 aa).

The 327-residue stretch at 7-333 folds into the Helicase ATP-binding domain; that stretch reads NGITVNFPFE…KEMLLQLEKT (327 aa). 42–49 is an ATP binding site; sequence SPTGTGKT. Residues cysteine 157, cysteine 175, cysteine 184, and cysteine 220 each coordinate [4Fe-4S] cluster. Positions 263-266 match the DEAH box motif; it reads DEAH. The tract at residues 912–931 is disordered; it reads TSDDEDPGRTGDDPTRQAPE. Residues 918-931 are compositionally biased toward basic and acidic residues; sequence PGRTGDDPTRQAPE.

It belongs to the helicase family. RAD3/XPD subfamily.

It localises to the nucleus. The catalysed reaction is ATP + H2O = ADP + phosphate + H(+). Its function is as follows. A probable ATP-dependent DNA helicase implicated in DNA repair and the maintenance of genomic stability. Acts as an anti-recombinase to counteract toxic recombination and limit crossover during meiosis. Regulates meiotic recombination and crossover homeostasis by physically dissociating strand invasion events and thereby promotes noncrossover repair by meiotic synthesis dependent strand annealing (SDSA) as well as disassembly of D loop recombination intermediates. This Aedes aegypti (Yellowfever mosquito) protein is Regulator of telomere elongation helicase 1 homolog.